The following is an 83-amino-acid chain: Kappa-actitoxin-Aer3a (83 aa).

The N-terminal stretch at 1–22 is a signal peptide; that stretch reads MKGQMIICLVLIALCMSVVVMA. A propeptide spanning residues 23–49 is cleaved from the precursor; sequence QNLRAEELEKANPKDERVRSFERNQKR. Positions 51–83 constitute a ShKT domain; that stretch reads CKDYLPKSECTQFRCRTSMKYKYTNCKKTCGTC. Cystine bridges form between Cys-51-Cys-83, Cys-60-Cys-76, and Cys-65-Cys-80.

The protein belongs to the sea anemone type 1 potassium channel toxin family. Type 1a subfamily.

It localises to the secreted. The protein resides in the nematocyst. Specifically, dose-dependently and potently blocks the voltage-gated potassium channel Kv1.1/KCNA1 (Ki=1.6 pM). Moderately blocks potassium channel heterotetramers formed by 3 subunits of Kv1.1/KCNA1 and 1 subunit of Kv1.2/KCNA2 (Ki=56 nM) and weakly blocks those formed by 2 subunits of Kv1.1/KCNA1 and 2 subunits of Kv1.2/KCNA2 (Ki=14 nM). In Anemonia erythraea (Sea anemone), this protein is Kappa-actitoxin-Aer3a.